A 261-amino-acid polypeptide reads, in one-letter code: MKSIKRIGLCISLLILIIFVTSCDGDNKIIGDSKEEQIKKSFAKTLDIYPIKNLEDLYDKEGYRDGEFKKDDKGTWLIRSEMKIQLKGENLESRGAVLEINRNTRTAKGHYIVREVVEDSDGMTHNHTKRYPVKMENNKMIPLKPIDDEKVKKEIEEFNFFVQYGNFKELENYKEDEVSYNPEVPIYSAKYQLKNSDYNVEQLRKRYNIPTQKAPKLLLKGSGNLKGSSVGYKNIEFTFIENKEENIYFTDSIYFNPSEDK.

An N-terminal signal peptide occupies residues 1 to 22 (MKSIKRIGLCISLLILIIFVTS). Residue C23 is the site of N-palmitoyl cysteine attachment. The S-diacylglycerol cysteine moiety is linked to residue C23.

This sequence belongs to the staphylococcal tandem lipoprotein family.

It localises to the cell membrane. This is an uncharacterized protein from Staphylococcus aureus (strain USA300).